The sequence spans 558 residues: Oxygen-dependent choline dehydrogenase (558 aa).

Residue 8-37 (DYIIIGAGSAGNVLATRLTEDSDVSVLLLE) participates in FAD binding. The active-site Proton acceptor is histidine 475.

The protein belongs to the GMC oxidoreductase family. It depends on FAD as a cofactor.

It catalyses the reaction choline + A = betaine aldehyde + AH2. The catalysed reaction is betaine aldehyde + NAD(+) + H2O = glycine betaine + NADH + 2 H(+). It participates in amine and polyamine biosynthesis; betaine biosynthesis via choline pathway; betaine aldehyde from choline (cytochrome c reductase route): step 1/1. In terms of biological role, involved in the biosynthesis of the osmoprotectant glycine betaine. Catalyzes the oxidation of choline to betaine aldehyde and betaine aldehyde to glycine betaine at the same rate. This Chromohalobacter salexigens (strain ATCC BAA-138 / DSM 3043 / CIP 106854 / NCIMB 13768 / 1H11) protein is Oxygen-dependent choline dehydrogenase.